The primary structure comprises 63 residues: Beta-defensin 4 (63 aa).

The N-terminal stretch at 1–22 (MRIHYLLFSFLLVLLSPLSAFT) is a signal peptide. Glutamine 23 is modified (pyrrolidone carboxylic acid). Intrachain disulfides connect cysteine 31-cysteine 59, cysteine 38-cysteine 52, and cysteine 42-cysteine 60.

The protein belongs to the beta-defensin family. As to expression, highly expressed in lung.

It is found in the secreted. In terms of biological role, exhibits antimicrobial activity against Gram-negative bacteria and Gram-positive bacteria. May act as a ligand for C-C chemokine receptor CCR6. Binds to CCR6 and induces chemotactic activity of CCR6-expressing cells. This chain is Beta-defensin 4 (Defb4), found in Rattus norvegicus (Rat).